A 493-amino-acid chain; its full sequence is Cysteine--tRNA ligase (493 aa).

Position 29 (C29) interacts with Zn(2+). The 'HIGH' region motif lies at 31 to 41 (ATVQSEPHIGH). Zn(2+) is bound by residues C214, H239, and E243. Positions 270–274 (KMSKS) match the 'KMSKS' region motif. K273 contributes to the ATP binding site.

This sequence belongs to the class-I aminoacyl-tRNA synthetase family. In terms of assembly, monomer. Zn(2+) serves as cofactor.

It is found in the cytoplasm. It catalyses the reaction tRNA(Cys) + L-cysteine + ATP = L-cysteinyl-tRNA(Cys) + AMP + diphosphate. This chain is Cysteine--tRNA ligase, found in Renibacterium salmoninarum (strain ATCC 33209 / DSM 20767 / JCM 11484 / NBRC 15589 / NCIMB 2235).